The following is a 506-amino-acid chain: 7,8-dihydro-6-hydroxymethylpterin dimethyltransferase (506 aa).

[4Fe-4S] cluster contacts are provided by Cys-73, Cys-77, Cys-80, Cys-98, Cys-102, and Cys-105. Residues 82–300 form the Radical SAM core domain; that stretch reads NHKSTTILAN…FIKLVEEQTD (219 aa).

Belongs to the radical SAM superfamily. Requires [4Fe-4S] cluster as cofactor. S-adenosyl-L-methionine serves as cofactor.

It participates in cofactor biosynthesis; 5,6,7,8-tetrahydromethanopterin biosynthesis. Functionally, is responsible for the addition of methyl groups at C-7 and C-9 of the pterin ring during methanopterin (MPT) biosynthesis. Catalyzes methylation of 7,8-dihydro-6-hydroxymethylpterin, likely using methylenetetrahydromethanopterin as a methyl group donor, via a radical-based mechanism. The polypeptide is 7,8-dihydro-6-hydroxymethylpterin dimethyltransferase (Methanocaldococcus jannaschii (strain ATCC 43067 / DSM 2661 / JAL-1 / JCM 10045 / NBRC 100440) (Methanococcus jannaschii)).